The chain runs to 660 residues: MEHIRTPKVENVRLVDRVSCKKAALGTLYLTATHVIFVENAPDTRKETWILHSQISTIEKQATTATGCPLLIRCKNFQIVQLVIPQERDCHDVYISLIRLARPVKYEELYCFSFNPKLDKEEREQGWLLVDLSEEYKRMGLPDNYWQLSDVNRDYRVCDSYPTELYVPRSATAHIIVGSSKFRSRRRFPALSYYCKDSHASICRSSQPLSGFSARCLEDEQMLQAIRKANPGSDFIYVVDTRPKLNAMANRAAGKGYENEDNYSNIKFQFIGIENIHVMRNSLQKMLEVCELKSPSMSDFLWGLENSGWLRHIKAIMDAGIFIAKAVSEEGASVLVHCSDGWDRTAQVCSVASLLLDPYYRTLKGFMVLIEKDWISFGHKFNHRYGNLDGDPKEISPVIDQFIECVWQLTEQFPCAFEFNERFLTHIQHHVYSCQFGNFLCNSQKERRELKIQERTYSLWSNLWKNRADYLNPLFRADHSQTQGSLHLPTAPCNFTYKFWNGMYNRFEKGLQPRQSVTDYLMAVKEESQQLEEELESLEERLEKIQKVHLHGTKVKSKQSEPSKHSGFSTSDHSTANTPQDYSGNSKSFPSRSPSQGDEDSALILTQDNLKSSDPDLSVNSDQESGVEDLSCRSPSGGEHAPSEDSGKDRDSDEAVFLTA.

Residues 126–504 enclose the Myotubularin phosphatase domain; the sequence is GWLLVDLSEE…FTYKFWNGMY (379 aa). 3 residues coordinate a 1,2-diacyl-sn-glycero-3-phospho-(1D-myo-inositol-3-phosphate): asparagine 250, asparagine 275, and isoleucine 276. Cysteine 338 (phosphocysteine intermediate) is an active-site residue. 7 residues coordinate a 1,2-diacyl-sn-glycero-3-phospho-(1D-myo-inositol-3-phosphate): serine 339, aspartate 340, glycine 341, tryptophan 342, aspartate 343, arginine 344, and arginine 384. Residues 514–548 are a coiled coil; the sequence is RQSVTDYLMAVKEESQQLEEELESLEERLEKIQKV. Positions 550–660 are disordered; sequence LHGTKVKSKQ…DSDEAVFLTA (111 aa). Over residues 566–596 the composition is skewed to polar residues; it reads SGFSTSDHSTANTPQDYSGNSKSFPSRSPSQ. Position 578 is a phosphothreonine (threonine 578). Basic and acidic residues predominate over residues 641-653; the sequence is APSEDSGKDRDSD.

The protein belongs to the protein-tyrosine phosphatase family. Non-receptor class myotubularin subfamily. In terms of assembly, heterodimer (via C-terminus) with MTMR9 (via coiled coil domain); the interaction enhances MTMR7 catalytic activity. Does not homodimerize. Interacts with RAB1B (in GDP-bound form). As to expression, highly expressed in brain (at protein level). Expressed at low levels in liver, kidney and testis.

Its subcellular location is the cytoplasm. The protein resides in the endomembrane system. The enzyme catalyses a 1,2-diacyl-sn-glycero-3-phospho-(1D-myo-inositol-3-phosphate) + H2O = a 1,2-diacyl-sn-glycero-3-phospho-(1D-myo-inositol) + phosphate. The catalysed reaction is 1D-myo-inositol 1,3-bisphosphate + H2O = 1D-myo-inositol 1-phosphate + phosphate. With respect to regulation, interaction with MTMR9 increases phosphatase activity. Lipid phosphatase that specifically dephosphorylates the D-3 position of phosphatidylinositol 3-phosphate (PtdIns(3)P) and inositol 1,3-bisphosphate (Ins(1,3)P2). The polypeptide is Phosphatidylinositol-3-phosphate phosphatase MTMR7 (Mus musculus (Mouse)).